We begin with the raw amino-acid sequence, 639 residues long: 2-oxoacid:ferredoxin oxidoreductase 1, subunit alpha (639 aa).

The short motif at Tyr266–Pro270 is the YPITP motif element. Substrate-binding residues include Thr269 and Arg352.

As to quaternary structure, heterodimer composed of an alpha and a beta subunit.

It carries out the reaction a 2-oxocarboxylate + 2 oxidized [2Fe-2S]-[ferredoxin] + CoA = an acyl-CoA + 2 reduced [2Fe-2S]-[ferredoxin] + CO2 + H(+). Its function is as follows. Catalyzes the coenzyme A-dependent oxidative decarboxylation of different 2-oxoacids such as pyruvate, 2-oxobutyrate and glyoxylate to form their CoA derivatives. This is 2-oxoacid:ferredoxin oxidoreductase 1, subunit alpha from Aeropyrum pernix (strain ATCC 700893 / DSM 11879 / JCM 9820 / NBRC 100138 / K1).